The primary structure comprises 562 residues: MDPQPPPPAQGSPPHRDRGRGRGRGRGRGRGRGRGRGGAGAPRAPLPCPTCGRLFRFPYYLSRHRLSHSGLRPHACPLCPKAFRRPAHLSRHLRGHGPQPPLRCAACPRTFPEPAQLRRHLAQEHAGSEVDLSTQRAVKEEPEASWGPQDEGVEQPATVVVAGAEEEATTQWPAGDSAPAAVPTSTDPRESEAKEAEAGAAELRAELALAAGRQEEKQVLLQADWTLLCLRCREAFATKGELKAHPCLRPEGEQEGEGGPPPRPKRHQCSICLKAFARPWSLSRHRLVHSTDRPFVCPDCGLAFRLASYLRQHRRVHGPLSLLAPLPGAGKKDDKASGGRNSGKGPEGGEGAECGGASEGGEGGHNGGDATPARPPAGEPRFWCPECGKGFRRRAHLRQHGVTHSGARPFQCVRCQREFKRLADLARHAQVHAGGPAPHPCPRCPRRFSRAYSLLRHQRCHRAELERAELERAAALQELQTQASQSPQPPQPLKQEAEGLPLPIAHIKEEPPSPGTPPQSPPAPPVFLSASCFDSQDHSAFEMEDEEMDSKAHLCGLGGLAS.

Pro residues predominate over residues 1–11 (MDPQPPPPAQG). The tract at residues 1–45 (MDPQPPPPAQGSPPHRDRGRGRGRGRGRGRGRGRGRGGAGAPRAP) is disordered. Residues 17–35 (DRGRGRGRGRGRGRGRGRG) are compositionally biased toward basic residues. C2H2-type zinc fingers lie at residues 46–68 (LPCP…RLSH), 74–96 (HACP…LRGH), and 102–125 (LRCA…AQEH). Position 94 is an omega-N-methylarginine (Arg94). 2 disordered regions span residues 120–154 (HLAQ…EGVE) and 166–199 (EEAT…AEAG). The span at 187-197 (DPRESEAKEAE) shows a compositional bias: basic and acidic residues. Ser191 is subject to Phosphoserine. 2 consecutive C2H2-type zinc fingers follow at residues 267-289 (HQCS…RLVH) and 295-317 (FVCP…RRVH). The tract at residues 321 to 377 (SLLAPLPGAGKKDDKASGGRNSGKGPEGGEGAECGGASEGGEGGHNGGDATPARPPA) is disordered. The segment covering 340-367 (RNSGKGPEGGEGAECGGASEGGEGGHNG) has biased composition (gly residues). C2H2-type zinc fingers lie at residues 382–404 (FWCP…GVTH), 410–432 (FQCV…AQVH), and 439–461 (HPCP…QRCH). Ser486 is modified (phosphoserine). The segment at 505 to 530 (AHIKEEPPSPGTPPQSPPAPPVFLSA) is disordered. Over residues 512 to 525 (PSPGTPPQSPPAPP) the composition is skewed to pro residues.

This sequence belongs to the krueppel C2H2-type zinc-finger protein family.

The protein resides in the nucleus. May be involved in transcriptional regulation. This Mus musculus (Mouse) protein is Zinc finger protein 579 (Znf579).